A 647-amino-acid polypeptide reads, in one-letter code: MINITFPDGAVREFESGVTTFEIAQSISNSLAKKALAGKFNGKLIDTTRAITEDGSIEIVTPDHEDALPILRHSAAHLFAQAARRLFPDIHLGVGPAIEDGFYYDTDNTAGQISNEDLPRIEEEMQKIVKENFPSIREEVTKDEAREIFKNDPYKLELIEEHSEDEGGLTIYRQGEYVDLCRGPHVPSTGRIQIFHLLHVAGAYWRGNSDNAMMQRIYGTAWFDKKDLKNYLQMREEAKERDHRKLGKELDLFMISQEVGQGLPFWLPNGATIRRELERYIVNKELVSGYQHVYTPPLASVELYKTSGHWDHYQEDMFPTMDMGDGEEFVLRPMNCPHHIQVFKHHVHSYRELPIRIAEIGMMHRYEKSGALTGLQRVREMSLNDGHLFVTPEQIQEEFQRALQLIIDVYEDFNLTDYRFRLSLRDPQDTHKYFDNDEMWENAQTMLRAALDEMGVDYFEAEGEAAFYGPKLDIQIKTALGKEETLSTIQLDFLLPERFDLKYIGADGEDHRPVMIHRGVISTMERFTAILIENYKGAFPTWLAPHQVTLIPVSNEKHVDYAWEVAKKLRDRGVRADVDERNEKMQFKIRASQTSKIPYQLIVGDKEMEDETVNVRRYGQKETQTVSVDNFVQAILADIANKSRVEK.

Residues 1–61 enclose the TGS domain; it reads MINITFPDGA…TEDGSIEIVT (61 aa). The tract at residues 242–540 is catalytic; sequence DHRKLGKELD…LIENYKGAFP (299 aa). Zn(2+) contacts are provided by cysteine 336, histidine 387, and histidine 517.

This sequence belongs to the class-II aminoacyl-tRNA synthetase family. As to quaternary structure, homodimer. It depends on Zn(2+) as a cofactor.

Its subcellular location is the cytoplasm. It carries out the reaction tRNA(Thr) + L-threonine + ATP = L-threonyl-tRNA(Thr) + AMP + diphosphate + H(+). Functionally, catalyzes the attachment of threonine to tRNA(Thr) in a two-step reaction: L-threonine is first activated by ATP to form Thr-AMP and then transferred to the acceptor end of tRNA(Thr). Also edits incorrectly charged L-seryl-tRNA(Thr). The chain is Threonine--tRNA ligase from Streptococcus pneumoniae serotype 4 (strain ATCC BAA-334 / TIGR4).